Here is a 684-residue protein sequence, read N- to C-terminus: Gabija protein GajB (684 aa).

The UvrD-like helicase ATP-binding domain occupies 14-351 (EQKSINAIFN…IEVINKIRND (338 aa)). 35–42 (SGAGAGKT) provides a ligand contact to ATP.

The protein belongs to the helicase family. In terms of assembly, homodimer. Interacts with GajA; 2 GajB dimers dock at opposite sides of the GajA complex to form a 4:4 GajA-GajB assembly (GajAB). GajAB interacts with Bacillus phage Phi3T Gad1 protein; this interaction forms a 4:4:8 GajAB-Gad1 complex and leads to GajAB inhibition.

In terms of biological role, component of antiviral defense system Gabija type II, composed of GajA and GajB. Expression of Gabija type II in B.subtilis (strain BEST7003) confers resistance to phages phi105, and SpBeta. May be a helicase or contribute to GajA activation. This is Gabija protein GajB from Bacillus cereus (strain HuB5-5).